The sequence spans 620 residues: 1-deoxy-D-xylulose-5-phosphate synthase (620 aa).

Thiamine diphosphate is bound by residues histidine 80 and 121–123 (GHS). Position 152 (aspartate 152) interacts with Mg(2+). Residues 153-154 (GA), asparagine 181, tyrosine 288, and glutamate 370 each bind thiamine diphosphate. Asparagine 181 contacts Mg(2+).

This sequence belongs to the transketolase family. DXPS subfamily. Homodimer. It depends on Mg(2+) as a cofactor. Thiamine diphosphate serves as cofactor.

It carries out the reaction D-glyceraldehyde 3-phosphate + pyruvate + H(+) = 1-deoxy-D-xylulose 5-phosphate + CO2. The protein operates within metabolic intermediate biosynthesis; 1-deoxy-D-xylulose 5-phosphate biosynthesis; 1-deoxy-D-xylulose 5-phosphate from D-glyceraldehyde 3-phosphate and pyruvate: step 1/1. Its function is as follows. Catalyzes the acyloin condensation reaction between C atoms 2 and 3 of pyruvate and glyceraldehyde 3-phosphate to yield 1-deoxy-D-xylulose-5-phosphate (DXP). The chain is 1-deoxy-D-xylulose-5-phosphate synthase from Escherichia coli O139:H28 (strain E24377A / ETEC).